The chain runs to 227 residues: MELVFIRHGFSEWNAKNLFTGWRDVNLTERGVEEAKTAGKKLLDKGYEFDIAFTSVLTRAIKTCNIVLEESHQLWIPQVKNWRLNERHYGALQGLDKKATAEQYGDEQVHIWRRSYDISPPDLDPQDPNSAHNDRRYANIPSDVVPNAENLKLTLERALPFWEDQIAPAMLSGKRVLVVAHGNSLRALAKHIIGISDAEIMDFEIPTGQPLVLKLDDKLNYVEHYYL.

Substrate-binding positions include 7–14 (RHGFSEWN), 20–21 (TG), Arg59, 86–89 (ERHY), Lys97, 113–114 (RR), and 182–183 (GN). His8 functions as the Tele-phosphohistidine intermediate in the catalytic mechanism. The active-site Proton donor/acceptor is Glu86.

Belongs to the phosphoglycerate mutase family. BPG-dependent PGAM subfamily. Homodimer.

The catalysed reaction is (2R)-2-phosphoglycerate = (2R)-3-phosphoglycerate. It participates in carbohydrate degradation; glycolysis; pyruvate from D-glyceraldehyde 3-phosphate: step 3/5. Catalyzes the interconversion of 2-phosphoglycerate and 3-phosphoglycerate. The chain is 2,3-bisphosphoglycerate-dependent phosphoglycerate mutase from Haemophilus influenzae (strain ATCC 51907 / DSM 11121 / KW20 / Rd).